We begin with the raw amino-acid sequence, 708 residues long: Leucine-rich repeat neuronal protein 3 (708 aa).

A signal peptide spans 1 to 22 (MKDMPLQIHVLLGLAITTLVQA). The LRRNT domain maps to 23–69 (VDKKVDCPQLCTCEIRPWFTPTSIYMEASTVDCNDLGLLTFPARLPA). The Extracellular portion of the chain corresponds to 23–628 (VDKKVDCPQL…KEYEKSNTTT (606 aa)). 12 LRR repeats span residues 70-91 (NTQI…TDFP), 93-114 (NLTG…NVKK), 117-138 (QLLS…CLSE), 141-162 (NLQE…AFIG), 165-186 (NLLR…WFDA), 189-210 (NLEI…NFKP), 213-234 (NLRS…ALVG), 237-258 (NLES…ALQK), 261-282 (NLKF…DFSN), 285-304 (HLKE…DSLA), 310-332 (DLRK…AFFR), and 335-358 (KLES…ESLP). 2 N-linked (GlcNAc...) asparagine glycosylation sites follow: asparagine 93 and asparagine 103. N-linked (GlcNAc...) asparagine glycosylation is present at asparagine 223. Residues 368–421 (NPIRCDCVIRWINMNKTNIRFMEPDSLFCVDPPEFQGQNVRQVHFRDMMEICLP) enclose the LRRCT domain. Asparagine 382 carries an N-linked (GlcNAc...) asparagine glycan. One can recognise an Ig-like C2-type domain in the interval 421–514 (PLIAPESFPS…DLKSVMIKVD (94 aa)). A disulfide bond links cysteine 444 and cysteine 496. 4 N-linked (GlcNAc...) asparagine glycosylation sites follow: asparagine 522, asparagine 579, asparagine 608, and asparagine 625. In terms of domain architecture, Fibronectin type-III spans 523-617 (GSLNIKIRDI…NVTTKGLDPD (95 aa)). A helical transmembrane segment spans residues 629 to 649 (LMACLGGLLGIIGVICLISCL). Residues 650–708 (SPEMNCDGGHSYVRNYLQKPTFALGELYPPLINLWEAGKEKSTSLKVKATVIGLPTNMS) lie on the Cytoplasmic side of the membrane.

It is found in the membrane. In Pongo abelii (Sumatran orangutan), this protein is Leucine-rich repeat neuronal protein 3 (LRRN3).